The chain runs to 616 residues: Chaperone protein HscA (616 aa).

This sequence belongs to the heat shock protein 70 family.

Chaperone involved in the maturation of iron-sulfur cluster-containing proteins. Has a low intrinsic ATPase activity which is markedly stimulated by HscB. Involved in the maturation of IscU. This Salmonella newport (strain SL254) protein is Chaperone protein HscA.